Reading from the N-terminus, the 104-residue chain is Thioredoxin (104 aa).

Positions 2-104 (AIVKVTDSNF…NLAEVIEKHL (103 aa)) constitute a Thioredoxin domain. C29 and C32 are joined by a disulfide.

It belongs to the thioredoxin family.

Its function is as follows. Component of the thioredoxin-thioredoxin reductase system. Participates in various redox reactions through the reversible oxidation of its active center dithiol to a disulfide and catalyzes dithiol-disulfide exchange reactions. This Staphylococcus saprophyticus subsp. saprophyticus (strain ATCC 15305 / DSM 20229 / NCIMB 8711 / NCTC 7292 / S-41) protein is Thioredoxin (trxA).